The sequence spans 144 residues: MKLNTIKPAEGAKHARRRVGRGIGSGLGKTGGRGHKGQKSRAGGFHKVGFEGGQMPLQRRLPKRGFNSLTKADTANVRTADLVRVEADVIDILALKQANVIPSGARAVKVYLSGDVTRAVTVQGLALSKGARAAVEAAGGKIVE.

The interval 1 to 54 (MKLNTIKPAEGAKHARRRVGRGIGSGLGKTGGRGHKGQKSRAGGFHKVGFEGGQ) is disordered. Over residues 21-31 (RGIGSGLGKTG) the composition is skewed to gly residues.

The protein belongs to the universal ribosomal protein uL15 family. In terms of assembly, part of the 50S ribosomal subunit.

In terms of biological role, binds to the 23S rRNA. The sequence is that of Large ribosomal subunit protein uL15 from Methylobacillus flagellatus (strain ATCC 51484 / DSM 6875 / VKM B-1610 / KT).